The sequence spans 33 residues: Thrombin-like enzyme RP34 (33 aa).

Positions 1-33 constitute a Peptidase S1 domain; that stretch reads VIGGDEXDINEHRSLALMYXSWSHRFIXXGXLI.

It belongs to the peptidase S1 family. Snake venom subfamily. In terms of assembly, homodimer. As to expression, expressed by the venom gland.

It localises to the secreted. The enzyme catalyses Selective cleavage of Arg-|-Xaa bond in fibrinogen, to form fibrin, and release fibrinopeptide A. The specificity of further degradation of fibrinogen varies with species origin of the enzyme.. Functionally, thrombin-like snake venom serine protease that displays clotting activity on fibrinogen. Shows both arginine-ester hydrolase and amidase activities on synthetic substrates. Also shows proteolytic activity toward casein. This Cerastes cerastes (Horned desert viper) protein is Thrombin-like enzyme RP34.